The primary structure comprises 140 residues: PDZ domain-containing protein 11 (140 aa).

Positions 47 to 129 (IVTLKKPPGA…ISMRVRFFPY (83 aa)) constitute a PDZ domain.

In terms of assembly, interacts with ATP2B1, ATP2B2, ATP2B3, ATP2B4 and ATP7A. Interacts with PLEKHA7 (via WW domains) at zonula adherens; this interaction is essential for the interaction between PLEKHA7 and the ADAM10-binding protein TSPAN33. Interacts with SLC5A6.

It localises to the cytoplasm. Its subcellular location is the cell junction. The protein resides in the adherens junction. The protein localises to the cell membrane. Its function is as follows. Mediates docking of ADAM10 to zonula adherens by interacting with PLEKHA7 which is required for PLEKHA7 to interact with the ADAM10-binding protein TSPAN33. The polypeptide is PDZ domain-containing protein 11 (PDZD11) (Bos taurus (Bovine)).